A 206-amino-acid polypeptide reads, in one-letter code: Xanthine phosphoribosyltransferase (206 aa).

Xanthine is bound by residues Leu-28 and Asn-35. Residue 136–140 participates in 5-phospho-alpha-D-ribose 1-diphosphate binding; the sequence is ANGQA. Residue Lys-164 participates in xanthine binding.

It belongs to the purine/pyrimidine phosphoribosyltransferase family. Xpt subfamily. As to quaternary structure, homodimer.

Its subcellular location is the cytoplasm. It catalyses the reaction XMP + diphosphate = xanthine + 5-phospho-alpha-D-ribose 1-diphosphate. The protein operates within purine metabolism; XMP biosynthesis via salvage pathway; XMP from xanthine: step 1/1. Converts the preformed base xanthine, a product of nucleic acid breakdown, to xanthosine 5'-monophosphate (XMP), so it can be reused for RNA or DNA synthesis. The protein is Xanthine phosphoribosyltransferase of Oenococcus oeni (strain ATCC BAA-331 / PSU-1).